We begin with the raw amino-acid sequence, 396 residues long: Elongation factor Tu 2 (396 aa).

One can recognise a tr-type G domain in the interval 10 to 206; it reads KPHVNVGTIG…AIDSYIPEPE (197 aa). The G1 stretch occupies residues 19–26; that stretch reads GHIDHGKT. 19-26 is a GTP binding site; that stretch reads GHIDHGKT. Residue T26 coordinates Mg(2+). The interval 60–64 is G2; sequence GITIA. The interval 81-84 is G3; it reads DCPG. Residues 81 to 85 and 136 to 139 contribute to the GTP site; these read DCPGH and NKCD. The G4 stretch occupies residues 136-139; that stretch reads NKCD. The segment at 174 to 176 is G5; that stretch reads SAL.

Belongs to the TRAFAC class translation factor GTPase superfamily. Classic translation factor GTPase family. EF-Tu/EF-1A subfamily. Monomer.

Its subcellular location is the cytoplasm. The catalysed reaction is GTP + H2O = GDP + phosphate + H(+). In terms of biological role, GTP hydrolase that promotes the GTP-dependent binding of aminoacyl-tRNA to the A-site of ribosomes during protein biosynthesis. The polypeptide is Elongation factor Tu 2 (Desulfotalea psychrophila (strain LSv54 / DSM 12343)).